A 498-amino-acid chain; its full sequence is ATP synthase subunit beta, chloroplastic (498 aa).

Position 172 to 179 (172 to 179) interacts with ATP; that stretch reads GGAGVGKT.

Belongs to the ATPase alpha/beta chains family. F-type ATPases have 2 components, CF(1) - the catalytic core - and CF(0) - the membrane proton channel. CF(1) has five subunits: alpha(3), beta(3), gamma(1), delta(1), epsilon(1). CF(0) has four main subunits: a(1), b(1), b'(1) and c(9-12).

It is found in the plastid. The protein resides in the chloroplast thylakoid membrane. It carries out the reaction ATP + H2O + 4 H(+)(in) = ADP + phosphate + 5 H(+)(out). In terms of biological role, produces ATP from ADP in the presence of a proton gradient across the membrane. The catalytic sites are hosted primarily by the beta subunits. This chain is ATP synthase subunit beta, chloroplastic, found in Nicotiana tabacum (Common tobacco).